The primary structure comprises 243 residues: Small ribosomal subunit protein eS4 (243 aa).

In terms of domain architecture, S4 RNA-binding spans 43–105 (IPLLYIVRDY…TGEHYRVLPN (63 aa)).

This sequence belongs to the eukaryotic ribosomal protein eS4 family.

The polypeptide is Small ribosomal subunit protein eS4 (rps4e) (Pyrococcus horikoshii (strain ATCC 700860 / DSM 12428 / JCM 9974 / NBRC 100139 / OT-3)).